Reading from the N-terminus, the 239-residue chain is Large ribosomal subunit protein uL1 (239 aa).

This sequence belongs to the universal ribosomal protein uL1 family. As to quaternary structure, part of the 50S ribosomal subunit.

Functionally, binds directly to 23S rRNA. The L1 stalk is quite mobile in the ribosome, and is involved in E site tRNA release. In terms of biological role, protein L1 is also a translational repressor protein, it controls the translation of the L11 operon by binding to its mRNA. The protein is Large ribosomal subunit protein uL1 of Rhodococcus erythropolis (strain PR4 / NBRC 100887).